The chain runs to 172 residues: Pre-intermoult gene 1 protein (172 aa).

Positions 1–22 (MKLTKLWLLFVCLGLFVTLVVS) are cleaved as a signal peptide. The segment covering 25-45 (TDSDADSDSSADSDSSADSDE) has biased composition (acidic residues). The interval 25–172 (TDSDADSDSS…RRNNNSRRRG (148 aa)) is disordered. 3 consecutive repeat copies span residues 27–32 (SDADSD), 33–38 (SSADSD), and 39–44 (SSADSD). The 3 X 6 AA tandem repeats of S-S-A-D-S-D stretch occupies residues 27–44 (SDADSDSSADSDSSADSD). A compositionally biased stretch (low complexity) spans 55 to 77 (TSTTESSATNSSGSSDDASGSSS). Residues 78-95 (DVDDGSDDDTDSGSDTDY) show a composition bias toward acidic residues. A compositionally biased stretch (basic residues) spans 104 to 172 (VKKRANRKKA…RRNNNSRRRG (69 aa)).

In terms of tissue distribution, low expression in first to third instar larvae salivary glands.

This chain is Pre-intermoult gene 1 protein (Pig1), found in Drosophila melanogaster (Fruit fly).